The sequence spans 429 residues: Enolase (429 aa).

Gln166 is a binding site for (2R)-2-phosphoglycerate. The Proton donor role is filled by Glu208. Mg(2+) is bound by residues Asp245, Glu289, and Asp316. The (2R)-2-phosphoglycerate site is built by Lys341, Arg370, Ser371, and Lys392. The Proton acceptor role is filled by Lys341.

The protein belongs to the enolase family. As to quaternary structure, component of the RNA degradosome, a multiprotein complex involved in RNA processing and mRNA degradation. Mg(2+) is required as a cofactor.

It is found in the cytoplasm. The protein resides in the secreted. The protein localises to the cell surface. It carries out the reaction (2R)-2-phosphoglycerate = phosphoenolpyruvate + H2O. Its pathway is carbohydrate degradation; glycolysis; pyruvate from D-glyceraldehyde 3-phosphate: step 4/5. Functionally, catalyzes the reversible conversion of 2-phosphoglycerate (2-PG) into phosphoenolpyruvate (PEP). It is essential for the degradation of carbohydrates via glycolysis. The polypeptide is Enolase (Acinetobacter baumannii (strain AB307-0294)).